The sequence spans 195 residues: MRLAEVVRNTSETQIRVKINLDGSGQQKLATGVPFLDHMLDQIARHGLIDLDIEAHGDTHIDDHHTVEDVGITLGQAIAKAVGDKKGIRRYGHSYVPLDEALSRVVIDFSGRPGLEFHVPFTRARIGTFDVDLSIEFFRGFVNHAGVTLHIDNLRGLNAHHQMETVFKAFGRALRMATELDERAAGQIPSTKGSL.

Belongs to the imidazoleglycerol-phosphate dehydratase family.

It localises to the cytoplasm. The catalysed reaction is D-erythro-1-(imidazol-4-yl)glycerol 3-phosphate = 3-(imidazol-4-yl)-2-oxopropyl phosphate + H2O. It functions in the pathway amino-acid biosynthesis; L-histidine biosynthesis; L-histidine from 5-phospho-alpha-D-ribose 1-diphosphate: step 6/9. This chain is Imidazoleglycerol-phosphate dehydratase, found in Paraburkholderia phymatum (strain DSM 17167 / CIP 108236 / LMG 21445 / STM815) (Burkholderia phymatum).